Consider the following 540-residue polypeptide: Maintenance of mitochondrial morphology protein 1 (540 aa).

The Lumenal portion of the chain corresponds to methionine 1–glycine 25. The chain crosses the membrane as a helical span at residues leucine 26–phenylalanine 46. Over glycine 47–threonine 540 the chain is Cytoplasmic. Disordered stretches follow at residues histidine 52–proline 135, glycine 275–alanine 331, glycine 416–methionine 471, and tyrosine 509–threonine 540. 3 stretches are compositionally biased toward polar residues: residues tyrosine 69–arginine 81, serine 88–serine 105, and tyrosine 112–serine 121. Basic residues predominate over residues lysine 122–serine 132. In terms of domain architecture, SMP-LTD spans glutamine 134 to proline 409. The span at threonine 321–alanine 331 shows a compositional bias: low complexity. 2 stretches are compositionally biased toward gly residues: residues threonine 442–methionine 471 and glycine 511–arginine 521.

This sequence belongs to the MMM1 family. In terms of assembly, homodimer. Component of the ER-mitochondria encounter structure (ERMES) or MDM complex, composed of MMM1, MDM10, MDM12 and MDM34. An MMM1 homodimer associates with one molecule of MDM12 on each side in a pairwise head-to-tail manner, and the SMP-LTD domains of MMM1 and MDM12 generate a continuous hydrophobic tunnel for phospholipid trafficking.

The protein resides in the endoplasmic reticulum membrane. Component of the ERMES/MDM complex, which serves as a molecular tether to connect the endoplasmic reticulum (ER) and mitochondria. Components of this complex are involved in the control of mitochondrial shape and protein biogenesis, and function in nonvesicular lipid trafficking between the ER and mitochondria. The MDM12-MMM1 subcomplex functions in the major beta-barrel assembly pathway that is responsible for biogenesis of all outer membrane beta-barrel proteins, and acts in a late step after the SAM complex. The MDM10-MDM12-MMM1 subcomplex further acts in the TOM40-specific pathway after the action of the MDM12-MMM1 complex. Essential for establishing and maintaining the structure of mitochondria and maintenance of mtDNA nucleoids. The polypeptide is Maintenance of mitochondrial morphology protein 1 (Blastomyces gilchristii (strain SLH14081) (Blastomyces dermatitidis)).